A 605-amino-acid polypeptide reads, in one-letter code: Isocitrate dehydrogenase kinase/phosphatase (605 aa).

ATP contacts are provided by residues 327 to 333 (APGIKGL) and Lys-348. The active site involves Asp-383.

Belongs to the AceK family.

The protein resides in the cytoplasm. It catalyses the reaction L-seryl-[isocitrate dehydrogenase] + ATP = O-phospho-L-seryl-[isocitrate dehydrogenase] + ADP + H(+). Its function is as follows. Bifunctional enzyme which can phosphorylate or dephosphorylate isocitrate dehydrogenase (IDH) on a specific serine residue. This is a regulatory mechanism which enables bacteria to bypass the Krebs cycle via the glyoxylate shunt in response to the source of carbon. When bacteria are grown on glucose, IDH is fully active and unphosphorylated, but when grown on acetate or ethanol, the activity of IDH declines drastically concomitant with its phosphorylation. This is Isocitrate dehydrogenase kinase/phosphatase from Burkholderia orbicola (strain AU 1054).